The following is a 513-amino-acid chain: Bifunctional purine biosynthesis protein PurH (513 aa).

The 144-residue stretch at 1–144 (MKRALVSVSD…KNYRDVTIVV (144 aa)) folds into the MGS-like domain.

The protein belongs to the PurH family.

It catalyses the reaction (6R)-10-formyltetrahydrofolate + 5-amino-1-(5-phospho-beta-D-ribosyl)imidazole-4-carboxamide = 5-formamido-1-(5-phospho-D-ribosyl)imidazole-4-carboxamide + (6S)-5,6,7,8-tetrahydrofolate. The enzyme catalyses IMP + H2O = 5-formamido-1-(5-phospho-D-ribosyl)imidazole-4-carboxamide. It functions in the pathway purine metabolism; IMP biosynthesis via de novo pathway; 5-formamido-1-(5-phospho-D-ribosyl)imidazole-4-carboxamide from 5-amino-1-(5-phospho-D-ribosyl)imidazole-4-carboxamide (10-formyl THF route): step 1/1. It participates in purine metabolism; IMP biosynthesis via de novo pathway; IMP from 5-formamido-1-(5-phospho-D-ribosyl)imidazole-4-carboxamide: step 1/1. This chain is Bifunctional purine biosynthesis protein PurH, found in Lactobacillus delbrueckii subsp. bulgaricus (strain ATCC BAA-365 / Lb-18).